Consider the following 432-residue polypeptide: Serine--tRNA ligase (432 aa).

An L-serine-binding site is contributed by 238-240; sequence TAE. ATP is bound at residue 269–271; that stretch reads RSE. Residue E292 coordinates L-serine. ATP is bound at residue 356-359; it reads EVSS. L-serine is bound at residue S392.

This sequence belongs to the class-II aminoacyl-tRNA synthetase family. Type-1 seryl-tRNA synthetase subfamily. As to quaternary structure, homodimer. The tRNA molecule binds across the dimer.

It is found in the cytoplasm. It carries out the reaction tRNA(Ser) + L-serine + ATP = L-seryl-tRNA(Ser) + AMP + diphosphate + H(+). It catalyses the reaction tRNA(Sec) + L-serine + ATP = L-seryl-tRNA(Sec) + AMP + diphosphate + H(+). Its pathway is aminoacyl-tRNA biosynthesis; selenocysteinyl-tRNA(Sec) biosynthesis; L-seryl-tRNA(Sec) from L-serine and tRNA(Sec): step 1/1. Catalyzes the attachment of serine to tRNA(Ser). Is also able to aminoacylate tRNA(Sec) with serine, to form the misacylated tRNA L-seryl-tRNA(Sec), which will be further converted into selenocysteinyl-tRNA(Sec). The chain is Serine--tRNA ligase from Buchnera aphidicola subsp. Baizongia pistaciae (strain Bp).